The chain runs to 186 residues: Negative modulator of initiation of replication (186 aa).

This sequence belongs to the SeqA family. In terms of assembly, homodimer. Polymerizes to form helical filaments.

It localises to the cytoplasm. Negative regulator of replication initiation, which contributes to regulation of DNA replication and ensures that replication initiation occurs exactly once per chromosome per cell cycle. Binds to pairs of hemimethylated GATC sequences in the oriC region, thus preventing assembly of replication proteins and re-initiation at newly replicated origins. Repression is relieved when the region becomes fully methylated. The chain is Negative modulator of initiation of replication from Haemophilus ducreyi (strain 35000HP / ATCC 700724).